The sequence spans 139 residues: Large ribosomal subunit protein uL16 (139 aa).

The segment covering 1-16 has biased composition (basic residues); that stretch reads MLIPRRVKHRKQHHPG. Residues 1–25 form a disordered region; the sequence is MLIPRRVKHRKQHHPGRSGQATGGT.

Belongs to the universal ribosomal protein uL16 family. In terms of assembly, part of the 50S ribosomal subunit.

In terms of biological role, binds 23S rRNA and is also seen to make contacts with the A and possibly P site tRNAs. The sequence is that of Large ribosomal subunit protein uL16 from Leifsonia xyli subsp. xyli (strain CTCB07).